A 129-amino-acid polypeptide reads, in one-letter code: ATP synthase epsilon chain (129 aa).

The protein belongs to the ATPase epsilon chain family. F-type ATPases have 2 components, CF(1) - the catalytic core - and CF(0) - the membrane proton channel. CF(1) has five subunits: alpha(3), beta(3), gamma(1), delta(1), epsilon(1). CF(0) has three main subunits: a, b and c.

The protein resides in the cell inner membrane. Its function is as follows. Produces ATP from ADP in the presence of a proton gradient across the membrane. This chain is ATP synthase epsilon chain, found in Campylobacter jejuni subsp. doylei (strain ATCC BAA-1458 / RM4099 / 269.97).